Consider the following 144-residue polypeptide: Large ribosomal subunit protein uL11 (144 aa).

It belongs to the universal ribosomal protein uL11 family. As to quaternary structure, part of the ribosomal stalk of the 50S ribosomal subunit. Interacts with L10 and the large rRNA to form the base of the stalk. L10 forms an elongated spine to which L12 dimers bind in a sequential fashion forming a multimeric L10(L12)X complex. One or more lysine residues are methylated.

Functionally, forms part of the ribosomal stalk which helps the ribosome interact with GTP-bound translation factors. In Frankia alni (strain DSM 45986 / CECT 9034 / ACN14a), this protein is Large ribosomal subunit protein uL11.